Consider the following 524-residue polypeptide: Protopine 6-monooxygenase (524 aa).

3 consecutive transmembrane segments (helical) span residues 4 to 24 (LMLAYLFPISVASIIAFVFLY), 232 to 252 (LASLSMFSDFAPLLGFVDIFQ), and 319 to 339 (MIMGGTDTTAVSLTWIISLLM). Cys-462 provides a ligand contact to heme.

Belongs to the cytochrome P450 family. Requires heme as cofactor.

It localises to the endoplasmic reticulum membrane. The catalysed reaction is protopine + reduced [NADPH--hemoprotein reductase] + O2 = 6-hydroxyprotopine + oxidized [NADPH--hemoprotein reductase] + H2O + H(+). The protein operates within alkaloid biosynthesis. Its function is as follows. Catalyzes the conversion of protopine and allocryptopine to dihydrosanguinarine and dihydrochelerythrine, respectively, in the biosynthesis of isoquinoline alkaloid sanguinarine. The sequence is that of Protopine 6-monooxygenase (CYP82N2v2) from Eschscholzia californica (California poppy).